The primary structure comprises 295 residues: Protease HtpX homolog (295 aa).

2 helical membrane passes run 15–35 (LVMA…GYAF) and 39–59 (AQTG…VILG). Zn(2+) is bound at residue His-143. Glu-144 is a catalytic residue. A Zn(2+)-binding site is contributed by His-147. The next 2 membrane-spanning stretches (helical) occupy residues 159–179 (ALAL…AMWW) and 195–215 (VIML…ASMA). Residue Glu-224 coordinates Zn(2+).

This sequence belongs to the peptidase M48B family. Zn(2+) is required as a cofactor.

The protein localises to the cell membrane. The polypeptide is Protease HtpX homolog (Ligilactobacillus salivarius (strain UCC118) (Lactobacillus salivarius)).